Reading from the N-terminus, the 518-residue chain is Sensor protein kinase HptS (518 aa).

2 consecutive transmembrane segments (helical) span residues 20 to 40 (IFPV…IYIW) and 222 to 242 (GITL…FGFI). The Histidine kinase domain maps to 297–513 (EQLIHSIEHT…LICYKIPLSR (217 aa)). A Phosphohistidine; by autocatalysis modification is found at histidine 325.

Autophosphorylated.

It localises to the cell membrane. It carries out the reaction ATP + protein L-histidine = ADP + protein N-phospho-L-histidine.. In terms of biological role, member of the two-component regulatory system HptS/HptR that regulates genes involved in hexose phosphate transport system in response to changes in extracellular phosphate sources. May act as a sensor protein kinase which is autophosphorylated at a histidine residue and transfers its phosphate group to the conserved aspartic acid residue in the regulatory domain of HptS. In turn, HptS antagonizes CcpA-dependent transcription of a subset of CcpA-regulated genes involved in antibiotic susceptibility. The chain is Sensor protein kinase HptS (hptS) from Staphylococcus aureus (strain MRSA252).